The primary structure comprises 403 residues: Ribose-phosphate pyrophosphokinase 1, chloroplastic (403 aa).

Residues Met1–Lys49 constitute a chloroplast transit peptide. Mg(2+)-binding residues include Asp217, His219, Asp228, and Asp232. The interval Gly303–Thr318 is binding of phosphoribosylpyrophosphate.

This sequence belongs to the ribose-phosphate pyrophosphokinase family. It depends on Mg(2+) as a cofactor.

It localises to the plastid. The protein resides in the chloroplast. It catalyses the reaction D-ribose 5-phosphate + ATP = 5-phospho-alpha-D-ribose 1-diphosphate + AMP + H(+). This Arabidopsis thaliana (Mouse-ear cress) protein is Ribose-phosphate pyrophosphokinase 1, chloroplastic (PRS1).